A 309-amino-acid chain; its full sequence is MAPAPPPPPPAPAPAAAAPAPPLMTGDRSALLNSIQKGKKLKKATTNDRSAPVVGGGVVGERKSNTPKSFAAPPVPTGAPSLPTSSNNTQQAEERPSMPALGGLFAGGMPKLRHIGKSSASAAPPSAPAPPTPQSELRPPTSAPPRPSIPPPSPASAPPIPSKAPPIPSSLPPPAQPAAPVKSPPSAPSLPSAVPPMPPKVPPPPLSQAPVANTSSRPSSFAPPAGHAPNVTSESPKFPNRGPSIPSASVPPVPPSSYVLQQRPNRVDDHGRFHFKDDSYLPIPHPFLGVPKVYRGGSGTTVPLNLSSF.

Positions 1–13 are enriched in pro residues; it reads MAPAPPPPPPAPA. The segment at 1-273 is disordered; that stretch reads MAPAPPPPPP…PNRVDDHGRF (273 aa). The 18-residue stretch at 27 to 44 folds into the WH2 domain; it reads DRSALLNSIQKGKKLKKA. Polar residues predominate over residues 82 to 91; the sequence is LPTSSNNTQQ. Pro residues predominate over residues 141-207; the sequence is TSAPPRPSIP…PPKVPPPPLS (67 aa).

The protein belongs to the verprolin family. In terms of assembly, interacts with wsp1. Interacts with myo1 (via SH3 domain). Interacts with actin monomers.

Its subcellular location is the cytoplasm. The protein resides in the cytoskeleton. In terms of biological role, involved in cytoskeletal organization and cellular growth. May exert its effects on the cytoskeleton directly, or indirectly via proline-binding proteins such as profilin or proteins possessing SH3 domains. Plays a role in actin patch assembly by enhancing the ability of myo1 to stimulate actin polymerization by the Arp2/3 complex. The protein is Verprolin of Schizosaccharomyces pombe (strain 972 / ATCC 24843) (Fission yeast).